Consider the following 1272-residue polypeptide: RING finger protein PFE0100w (1272 aa).

The disordered stretch occupies residues 216–260 (INKINDVSNNDPKKDNNEKNTSSNNITHNNYNDISNNNNNNNNIN). Residues 234-260 (KNTSSNNITHNNYNDISNNNNNNNNIN) show a composition bias toward low complexity. The CHCR repeat unit spans residues 608-752 (YIQTINYLET…GYKFIKYYPQ (145 aa)). The helical transmembrane segment at 771–791 (IFIPLFLDNIDFLFMFIVKFL) threads the bilayer. 2 disordered regions span residues 842–862 (NQNHNGIPSDSHNLSDDNNSQ) and 908–970 (ENQT…IINK). Composition is skewed to low complexity over residues 850–861 (SDSHNLSDDNNS) and 909–956 (NQTN…IQTN). Over residues 957 to 967 (KQKGNSTTNKI) the composition is skewed to polar residues. Positions 1146–1182 (MNDMNKNINDKCIEIEKDKKELEKIKKKQLKKKYNFY) form a coiled coil. Residues 1189–1224 (CSICKEILSVPMIHFLCKHSYHSYCLKDNNVCILCH) form an RING-type; atypical zinc finger.

It is found in the membrane. This is RING finger protein PFE0100w from Plasmodium falciparum (isolate 3D7).